Here is a 181-residue protein sequence, read N- to C-terminus: Oligoribonuclease (181 aa).

One can recognise an Exonuclease domain in the interval 8-171; it reads LIWIDLEMTG…DDIRESVAEL (164 aa). Residue Tyr-129 is part of the active site.

It belongs to the oligoribonuclease family.

It is found in the cytoplasm. 3'-to-5' exoribonuclease specific for small oligoribonucleotides. The protein is Oligoribonuclease of Enterobacter sp. (strain 638).